A 318-amino-acid polypeptide reads, in one-letter code: Ethyl acetate hydrolase (318 aa).

Residues Ser165, Asp261, and His291 contribute to the active site.

Belongs to the 'GDXG' lipolytic enzyme family. As to quaternary structure, monomer.

The protein localises to the cytoplasm. It carries out the reaction ethyl acetate + H2O = ethanol + acetate + H(+). With respect to regulation, inhibited by the serine protease inhibitor phenylmethylsulfonyl fluoride, the histidine reagent diethylpyrocarbonate and two sulfhydryl reagents, mercuric chloride and naphthol AS-D chloroacetate. Not inhibited by EDTA. Its function is as follows. Esterase that catalyzes the hydrolysis of ethyl acetate. Can also use propyl acetate and the chromogenic substrates alpha-naphthyl acetate, alpha-naphthyl propionate, alpha-naphthyl caproate and 4-nitrophenyl acetate, with a preference for short-chain aliphatic esters. Highest activity is obtained in vitro with propyl acetate, followed by ethyl acetate. In vivo, could be involved in pyoverdine biosynthesis, but its specific role and its in vivo substrate have not been identified. This is Ethyl acetate hydrolase from Pseudomonas putida (Arthrobacter siderocapsulatus).